The sequence spans 173 residues: Crossover junction endodeoxyribonuclease RuvC (173 aa).

Active-site residues include aspartate 8, glutamate 68, and aspartate 140. Mg(2+) is bound by residues aspartate 8, glutamate 68, and aspartate 140.

It belongs to the RuvC family. As to quaternary structure, homodimer which binds Holliday junction (HJ) DNA. The HJ becomes 2-fold symmetrical on binding to RuvC with unstacked arms; it has a different conformation from HJ DNA in complex with RuvA. In the full resolvosome a probable DNA-RuvA(4)-RuvB(12)-RuvC(2) complex forms which resolves the HJ. The cofactor is Mg(2+).

The protein localises to the cytoplasm. It catalyses the reaction Endonucleolytic cleavage at a junction such as a reciprocal single-stranded crossover between two homologous DNA duplexes (Holliday junction).. In terms of biological role, the RuvA-RuvB-RuvC complex processes Holliday junction (HJ) DNA during genetic recombination and DNA repair. Endonuclease that resolves HJ intermediates. Cleaves cruciform DNA by making single-stranded nicks across the HJ at symmetrical positions within the homologous arms, yielding a 5'-phosphate and a 3'-hydroxyl group; requires a central core of homology in the junction. The consensus cleavage sequence is 5'-(A/T)TT(C/G)-3'. Cleavage occurs on the 3'-side of the TT dinucleotide at the point of strand exchange. HJ branch migration catalyzed by RuvA-RuvB allows RuvC to scan DNA until it finds its consensus sequence, where it cleaves and resolves the cruciform DNA. In Saccharophagus degradans (strain 2-40 / ATCC 43961 / DSM 17024), this protein is Crossover junction endodeoxyribonuclease RuvC.